Reading from the N-terminus, the 259-residue chain is Global transcriptional regulator CodY (259 aa).

The segment at 1–155 is GAF domain; sequence MELLAKTRKL…SSTVVGMEIL (155 aa). Residues 203-222 constitute a DNA-binding region (H-T-H motif); that stretch reads ASKIADRVGITRSVIVNALR. Ser215 carries the phosphoserine modification.

The protein belongs to the CodY family.

It is found in the cytoplasm. DNA-binding global transcriptional regulator which is involved in the adaptive response to starvation and acts by directly or indirectly controlling the expression of numerous genes in response to nutrient availability. During rapid exponential growth, CodY is highly active and represses genes whose products allow adaptation to nutrient depletion. In Bacillus cereus (strain ATCC 10987 / NRS 248), this protein is Global transcriptional regulator CodY.